The primary structure comprises 876 residues: Leucine--tRNA ligase (876 aa).

The 'HIGH' region motif lies at 43–53 (PYPSGRIHIGH). A 'KMSKS' region motif is present at residues 632–636 (KMSKS). Lys-635 serves as a coordination point for ATP.

Belongs to the class-I aminoacyl-tRNA synthetase family.

The protein localises to the cytoplasm. It carries out the reaction tRNA(Leu) + L-leucine + ATP = L-leucyl-tRNA(Leu) + AMP + diphosphate. The chain is Leucine--tRNA ligase from Allorhizobium ampelinum (strain ATCC BAA-846 / DSM 112012 / S4) (Agrobacterium vitis (strain S4)).